A 77-amino-acid polypeptide reads, in one-letter code: U8-lycotoxin-Ls1u (77 aa).

The N-terminal stretch at methionine 1–alanine 20 is a signal peptide. Positions glutamine 21–lysine 26 are excised as a propeptide.

This sequence belongs to the neurotoxin 19 (CSTX) family. 08 (U8-Lctx) subfamily. Post-translationally, contains 4 disulfide bonds. Expressed by the venom gland.

It is found in the secreted. This is U8-lycotoxin-Ls1u from Lycosa singoriensis (Wolf spider).